The following is a 252-amino-acid chain: Probable truncated L-gulonolactone oxidase 7, mitochondrial (252 aa).

The transit peptide at 1–102 (MKRSMRSHLA…ELNYGVLVRY (102 aa)) directs the protein to the mitochondrion.

It belongs to the oxygen-dependent FAD-linked oxidoreductase family.

The protein resides in the mitochondrion. It carries out the reaction L-gulono-1,4-lactone + O2 = L-ascorbate + H2O2 + H(+). It participates in cofactor biosynthesis; L-ascorbate biosynthesis. Its function is as follows. May be involved in the biosynthesis of ascorbic acid. The chain is Probable truncated L-gulonolactone oxidase 7, mitochondrial from Arabidopsis thaliana (Mouse-ear cress).